A 1025-amino-acid chain; its full sequence is MGVPCIVMRLILVSALLVSVSLEHSDMVCAQTIRLTEETDKQALLEFKSQVSETSRVVLGSWNDSLPLCSWTGVKCGLKHRRVTGVDLGGLKLTGVVSPFVGNLSFLRSLNLADNFFHGAIPSEVGNLFRLQYLNMSNNLFGGVIPVVLSNCSSLSTLDLSSNHLEQGVPLEFGSLSKLVLLSLGRNNLTGKFPASLGNLTSLQMLDFIYNQIEGEIPGDIARLKQMIFFRIALNKFNGVFPPPIYNLSSLIFLSITGNSFSGTLRPDFGSLLPNLQILYMGINSFTGTIPETLSNISSLRQLDIPSNHLTGKIPLSFGRLQNLLLLGLNNNSLGNYSSGDLDFLGALTNCSQLQYLNVGFNKLGGQLPVFIANLSTQLTELSLGGNLISGSIPHGIGNLVSLQTLDLGENLLTGKLPPSLGELSELRKVLLYSNGLSGEIPSSLGNISGLTYLYLLNNSFEGSIPSSLGSCSYLLDLNLGTNKLNGSIPHELMELPSLVVLNVSFNLLVGPLRQDIGKLKFLLALDVSYNKLSGQIPQTLANCLSLEFLLLQGNSFVGPIPDIRGLTGLRFLDLSKNNLSGTIPEYMANFSKLQNLNLSLNNFDGAVPTEGVFRNTSAMSVFGNINLCGGIPSLQLQPCSVELPRRHSSVRKIITICVSAVMAALLLLCLCVVYLCWYKLRVKSVRANNNENDRSFSPVKSFYEKISYDELYKTTGGFSSSNLIGSGNFGAVFKGFLGSKNKAVAIKVLNLCKRGAAKSFIAECEALGGIRHRNLVKLVTICSSSDFEGNDFRALVYEFMPNGNLDMWLHPDEIEETGNPSRTLGLFARLNIAIDVASALVYLHTYCHNPIAHCDIKPSNILLDKDLTAHVSDFGLAQLLLKFDRDTFHIQFSSAGVRGTIGYAAPEYGMGGHPSIMGDVYSFGIVLLEIFTGKRPTNKLFVDGLTLHSFTKSALQKRQALDITDETILRGAYAQHFNMVECLTLVFRVGVSCSEESPVNRISMAEAISKLVSIRESFFRDEET.

Residues methionine 1–alanine 30 form the signal peptide. Residues glutamine 31–lysine 653 lie on the Extracellular side of the membrane. N-linked (GlcNAc...) asparagine glycans are attached at residues asparagine 63 and asparagine 103. LRR repeat units lie at residues leucine 104–leucine 128, arginine 130–asparagine 151, cysteine 152–serine 175, leucine 176–leucine 200, serine 202–leucine 224, glutamine 226–leucine 248, serine 249–serine 271, leucine 273–isoleucine 297, serine 298–asparagine 323, and leucine 325–phenylalanine 344. N-linked (GlcNAc...) asparagine glycans are attached at residues asparagine 135 and asparagine 151. N-linked (GlcNAc...) asparagine glycans are attached at residues asparagine 188 and asparagine 199. Asparagine 247 is a glycosylation site (N-linked (GlcNAc...) asparagine). Asparagine 296 is a glycosylation site (N-linked (GlcNAc...) asparagine). Asparagine 331, asparagine 336, asparagine 350, and asparagine 374 each carry an N-linked (GlcNAc...) asparagine glycan. LRR repeat units follow at residues cysteine 351 to asparagine 374, serine 376 to leucine 400, valine 401 to leucine 424, glutamate 426 to isoleucine 448, serine 449 to cysteine 472, serine 473 to leucine 496, serine 498 to leucine 520, lysine 521 to cysteine 544, serine 546 to leucine 567, threonine 568 to lysine 593, and glutamine 595 to asparagine 616. Residues asparagine 447, asparagine 458, asparagine 486, and asparagine 503 are each glycosylated (N-linked (GlcNAc...) asparagine). Asparagine 579, asparagine 590, asparagine 598, and asparagine 616 each carry an N-linked (GlcNAc...) asparagine glycan. Residues isoleucine 654–valine 674 form a helical membrane-spanning segment. Topologically, residues tyrosine 675–threonine 1025 are cytoplasmic. The residue at position 716 (threonine 716) is a Phosphothreonine. The Protein kinase domain maps to phenylalanine 719–phenylalanine 1020. Residues isoleucine 725–valine 733 and lysine 748 contribute to the ATP site. Tyrosine 798 and tyrosine 843 each carry phosphotyrosine. Aspartate 856 acts as the Proton acceptor in catalysis. Residue tyrosine 904 is modified to Phosphotyrosine.

Belongs to the protein kinase superfamily. Ser/Thr protein kinase family.

It localises to the cell membrane. The enzyme catalyses L-seryl-[protein] + ATP = O-phospho-L-seryl-[protein] + ADP + H(+). The catalysed reaction is L-threonyl-[protein] + ATP = O-phospho-L-threonyl-[protein] + ADP + H(+). This chain is Putative receptor-like protein kinase At3g47110, found in Arabidopsis thaliana (Mouse-ear cress).